The following is a 490-amino-acid chain: Protein lag-3 (490 aa).

5 disordered regions span residues Pro-18–Pro-55, Glu-105–Glu-155, Ser-213–Glu-235, Ser-307–Ile-362, and Gln-391–Asn-490. Residues Glu-105–Glu-119 are compositionally biased toward basic and acidic residues. Over residues Asn-122–Val-138 the composition is skewed to polar residues. The span at Ser-307–Met-318 shows a compositional bias: polar residues. Composition is skewed to low complexity over residues Gln-341 to Met-359, Gln-391 to Met-404, and Gln-413 to Met-456.

Component of a complex consisting of at least a lin-12/Notch intracellular domain (NICD), lag-1, and lag-3. Interacts with a NICD of lin-12/Notch or glp-1/Notch; the interactions are direct. Expressed in the progenitor zone and the early pachytene region of the hermaphrodite gonad.

It is found in the nucleus. Functionally, glp-1/Notch and lin-12/Notch proteins promote signaling by recruiting lag-3 to target promoters, where it functions as a transcriptional activator, probably as part of a complex with a Notch intracellular domain (NICD) and the transcription regulator lag-1. Involved in the p53-mediated germ-cell apoptotic response to DNA damage, perhaps acting as a transcriptional activator. May regulate phosphatase lip-1 mRNA transcription downstream of glp-1. In Caenorhabditis elegans, this protein is Protein lag-3 (sel-8).